Consider the following 327-residue polypeptide: Phenylalanine--tRNA ligase alpha subunit (327 aa).

Residue E252 participates in Mg(2+) binding.

It belongs to the class-II aminoacyl-tRNA synthetase family. Phe-tRNA synthetase alpha subunit type 1 subfamily. Tetramer of two alpha and two beta subunits. Mg(2+) is required as a cofactor.

The protein resides in the cytoplasm. The catalysed reaction is tRNA(Phe) + L-phenylalanine + ATP = L-phenylalanyl-tRNA(Phe) + AMP + diphosphate + H(+). This is Phenylalanine--tRNA ligase alpha subunit from Yersinia pseudotuberculosis serotype O:1b (strain IP 31758).